Reading from the N-terminus, the 224-residue chain is Pre-hexon-linking protein VIII (224 aa).

T64 carries the phosphothreonine; by host modification. A propeptide spanning residues 112–154 (RQLCPSQIGIKSPVLAGTGIQLSEDIPSASWIRPDGIFQLGGG) is cleaved from the precursor.

It belongs to the adenoviridae hexon-linking protein family. In terms of assembly, interacts with the peripentonal hexons as well as the hexons in the facets. Part of a complex composed of the core-capsid bridging protein, the endosome lysis protein VI and the hexon-linking protein VIII; these interactions bridge the virus core to the capsid. Cleaved by the viral protease during virion maturation. May cause the middle segment to be shed from the capsid.

Its subcellular location is the virion. The protein localises to the host nucleus. Structural component of the virion that acts as a cement protein on the capsid interior and which glue the peripentonal hexons and group-of-nine hexons together. The sequence is that of Pre-hexon-linking protein VIII from Canis lupus familiaris (Dog).